Consider the following 472-residue polypeptide: ATP synthase subunit beta (472 aa).

157–164 (GGAGVGKT) contributes to the ATP binding site.

The protein belongs to the ATPase alpha/beta chains family. In terms of assembly, F-type ATPases have 2 components, CF(1) - the catalytic core - and CF(0) - the membrane proton channel. CF(1) has five subunits: alpha(3), beta(3), gamma(1), delta(1), epsilon(1). CF(0) has three main subunits: a(1), b(2) and c(9-12). The alpha and beta chains form an alternating ring which encloses part of the gamma chain. CF(1) is attached to CF(0) by a central stalk formed by the gamma and epsilon chains, while a peripheral stalk is formed by the delta and b chains.

The protein localises to the cell membrane. The catalysed reaction is ATP + H2O + 4 H(+)(in) = ADP + phosphate + 5 H(+)(out). In terms of biological role, produces ATP from ADP in the presence of a proton gradient across the membrane. The catalytic sites are hosted primarily by the beta subunits. The chain is ATP synthase subunit beta from Desulforudis audaxviator (strain MP104C).